The chain runs to 432 residues: MVSEQIIDISGPLKGEIEVPGDKSMTHRAIMLASLAEGTSNIYKPLLGEDCRRTMDIFRLLGVDIKEDEDKLVVNSPGYKAFKTPHQVLYTGNSGTTTRLLAGLLSGLGIESVLSGDVSIGKRPMDRVLRPLKLMDANIEGIEDNYTPLIIKPSVIKGINYQMEVASAQVKSAILFASLFSNDTTVIKELDVSRNHTETMFRHFNIPIEAERLSITTTPDAIQHIKPADFHVPGDISSAAFFIVAALITPESDVTIHNVGINPTRSGIIDIVEKMGGNIQLFNQTTGAEPTASIRIQYTPMLQPITIEGELVTKAIDELPVIALLCTQAVGTSTIKDAEELKVKETNRIDTTADMLNLLGFELQPTNDGLIIHPSEFKTNATVDSLTDHRIGMMLAVASLLSSEPVKIKQFDAVNVSFPGFLPKLKLLENEG.

Positions 23, 24, and 28 each coordinate 3-phosphoshikimate. Residue Lys23 coordinates phosphoenolpyruvate. Phosphoenolpyruvate is bound by residues Gly95 and Arg123. 3-phosphoshikimate is bound by residues Ser167, Gln169, Asp317, and Lys344. Gln169 lines the phosphoenolpyruvate pocket. Asp317 functions as the Proton acceptor in the catalytic mechanism. Phosphoenolpyruvate is bound by residues Arg348 and Arg390.

The protein belongs to the EPSP synthase family. Monomer.

The protein resides in the cytoplasm. It catalyses the reaction 3-phosphoshikimate + phosphoenolpyruvate = 5-O-(1-carboxyvinyl)-3-phosphoshikimate + phosphate. It participates in metabolic intermediate biosynthesis; chorismate biosynthesis; chorismate from D-erythrose 4-phosphate and phosphoenolpyruvate: step 6/7. Functionally, catalyzes the transfer of the enolpyruvyl moiety of phosphoenolpyruvate (PEP) to the 5-hydroxyl of shikimate-3-phosphate (S3P) to produce enolpyruvyl shikimate-3-phosphate and inorganic phosphate. The chain is 3-phosphoshikimate 1-carboxyvinyltransferase from Staphylococcus aureus (strain JH9).